We begin with the raw amino-acid sequence, 166 residues long: Small ribosomal subunit protein uS5 (166 aa).

The 64-residue stretch at tyrosine 12 to valine 75 folds into the S5 DRBM domain.

It belongs to the universal ribosomal protein uS5 family. In terms of assembly, part of the 30S ribosomal subunit. Contacts proteins S4 and S8.

In terms of biological role, with S4 and S12 plays an important role in translational accuracy. Functionally, located at the back of the 30S subunit body where it stabilizes the conformation of the head with respect to the body. In Pseudomonas putida (strain ATCC 700007 / DSM 6899 / JCM 31910 / BCRC 17059 / LMG 24140 / F1), this protein is Small ribosomal subunit protein uS5.